We begin with the raw amino-acid sequence, 245 residues long: 5-oxoprolinase subunit A (245 aa).

The protein belongs to the LamB/PxpA family. As to quaternary structure, forms a complex composed of PxpA, PxpB and PxpC.

The enzyme catalyses 5-oxo-L-proline + ATP + 2 H2O = L-glutamate + ADP + phosphate + H(+). Functionally, catalyzes the cleavage of 5-oxoproline to form L-glutamate coupled to the hydrolysis of ATP to ADP and inorganic phosphate. The chain is 5-oxoprolinase subunit A from Yersinia pseudotuberculosis serotype O:1b (strain IP 31758).